The chain runs to 633 residues: Guanylate-binding protein 6 (633 aa).

The GTPase domain (Globular) stretch occupies residues M1–C310. Residues S35 to R277 enclose the GB1/RHD3-type G domain. GTP-binding positions include G45–S52, L67–S69, and D97–L101.

This sequence belongs to the TRAFAC class dynamin-like GTPase superfamily. GB1/RHD3 GTPase family. GB1 subfamily.

Its subcellular location is the cytoplasmic vesicle. It catalyses the reaction GTP + H2O = GDP + phosphate + H(+). In terms of biological role, interferon (IFN)-inducible GTPase that plays important roles in innate immunity against a diverse range of bacterial, viral and protozoan pathogens, such as bacterial pathogens Listeria monocytogenes and Mycobacterium bovis BCG as well as the protozoan pathogen Toxoplasma gondii. Confers protection to several pathogens, including the bacterial pathogens Listeria monocytogenes and Mycobacterium bovis BCG as well as the protozoan pathogen Toxoplasma gondii. The chain is Guanylate-binding protein 6 (GBP6) from Pongo abelii (Sumatran orangutan).